A 475-amino-acid chain; its full sequence is Methylenetetrahydrofolate--tRNA-(uracil-5-)-methyltransferase TrmFO (475 aa).

9–14 provides a ligand contact to FAD; sequence GGGLAG. Positions 427–447 are disordered; it reads APRNETGRRLRGPEKAALKKR.

Belongs to the MnmG family. TrmFO subfamily. Requires FAD as cofactor.

Its subcellular location is the cytoplasm. It catalyses the reaction uridine(54) in tRNA + (6R)-5,10-methylene-5,6,7,8-tetrahydrofolate + NADH + H(+) = 5-methyluridine(54) in tRNA + (6S)-5,6,7,8-tetrahydrofolate + NAD(+). It carries out the reaction uridine(54) in tRNA + (6R)-5,10-methylene-5,6,7,8-tetrahydrofolate + NADPH + H(+) = 5-methyluridine(54) in tRNA + (6S)-5,6,7,8-tetrahydrofolate + NADP(+). Its function is as follows. Catalyzes the folate-dependent formation of 5-methyl-uridine at position 54 (M-5-U54) in all tRNAs. In Methylobacterium radiotolerans (strain ATCC 27329 / DSM 1819 / JCM 2831 / NBRC 15690 / NCIMB 10815 / 0-1), this protein is Methylenetetrahydrofolate--tRNA-(uracil-5-)-methyltransferase TrmFO.